The chain runs to 273 residues: 4-hydroxy-tetrahydrodipicolinate reductase (273 aa).

Position 12–17 (12–17) interacts with NAD(+); it reads GSGGRM. An NADP(+)-binding site is contributed by Arg-39. Residues 102–104 and 126–129 each bind NAD(+); these read GTT and AANF. Residue His-159 is the Proton donor/acceptor of the active site. Position 160 (His-160) interacts with (S)-2,3,4,5-tetrahydrodipicolinate. The active-site Proton donor is the Lys-163. Position 169-170 (169-170) interacts with (S)-2,3,4,5-tetrahydrodipicolinate; sequence GT.

The protein belongs to the DapB family. In terms of assembly, homotetramer.

It localises to the cytoplasm. The enzyme catalyses (S)-2,3,4,5-tetrahydrodipicolinate + NAD(+) + H2O = (2S,4S)-4-hydroxy-2,3,4,5-tetrahydrodipicolinate + NADH + H(+). It catalyses the reaction (S)-2,3,4,5-tetrahydrodipicolinate + NADP(+) + H2O = (2S,4S)-4-hydroxy-2,3,4,5-tetrahydrodipicolinate + NADPH + H(+). It participates in amino-acid biosynthesis; L-lysine biosynthesis via DAP pathway; (S)-tetrahydrodipicolinate from L-aspartate: step 4/4. Functionally, catalyzes the conversion of 4-hydroxy-tetrahydrodipicolinate (HTPA) to tetrahydrodipicolinate. The protein is 4-hydroxy-tetrahydrodipicolinate reductase of Serratia proteamaculans (strain 568).